The primary structure comprises 156 residues: 3-dehydroquinate dehydratase (156 aa).

The active-site Proton acceptor is the Y31. Substrate-binding residues include N83, H89, and D96. Residue H109 is the Proton donor of the active site. Residues 110–111 and R120 contribute to the substrate site; that span reads LS.

This sequence belongs to the type-II 3-dehydroquinase family. In terms of assembly, homododecamer.

The enzyme catalyses 3-dehydroquinate = 3-dehydroshikimate + H2O. The protein operates within metabolic intermediate biosynthesis; chorismate biosynthesis; chorismate from D-erythrose 4-phosphate and phosphoenolpyruvate: step 3/7. Functionally, catalyzes a trans-dehydration via an enolate intermediate. This is 3-dehydroquinate dehydratase from Chromobacterium violaceum (strain ATCC 12472 / DSM 30191 / JCM 1249 / CCUG 213 / NBRC 12614 / NCIMB 9131 / NCTC 9757 / MK).